Reading from the N-terminus, the 339-residue chain is MEPIHNPPPQTCSYSRPSTTYTSFKDASCGTKVTRIIIALFLIVISCGLILCAYTFRDLLDADYSAQEGPQQATKLLQQLDKVLTGPPLPIWDNEHLFQFSCLMQNKHRRVLPIDICNPLTKFNFLEYICNCLMTKQSVNVNETDMCELFCPPTCTPENYRRLLCTSSVFPFVMWHDPSADTQEAMLTKMDQTMSSGRVGNSHWVLVIVDIEHRCVTFFDSFYDYIASPQQMREQLEGLAASLGAIYPKEGGADSDQEELLSPFQVRIGSTVKVQSPGEFTCGAWCCQFLAWYLENPDFDLEEKVPTNPSERRALLADFISTTEQAMSRYSSLSWPTTD.

Residues 36-56 (IIIALFLIVISCGLILCAYTF) traverse the membrane as a helical segment. Catalysis depends on residues His203, Asp220, and Cys282.

This sequence belongs to the peptidase C48 family.

It is found in the secreted. The protein localises to the host cell. The protein resides in the membrane. Effector proteins function to alter host cell physiology and promote bacterial survival in host tissues. This protease possesses deubiquitinating and deneddylating activities. In Chlamydia trachomatis serovar D (strain ATCC VR-885 / DSM 19411 / UW-3/Cx), this protein is Deubiquitinase and deneddylase Dub2 (cdu2).